Reading from the N-terminus, the 611-residue chain is Dihydroxy-acid dehydratase (611 aa).

Mg(2+) is bound at residue Asp-81. Cys-122 contacts [2Fe-2S] cluster. Mg(2+) contacts are provided by Asp-123 and Lys-124. Lys-124 carries the post-translational modification N6-carboxylysine. Cys-195 provides a ligand contact to [2Fe-2S] cluster. Glu-491 contributes to the Mg(2+) binding site. Ser-517 acts as the Proton acceptor in catalysis.

This sequence belongs to the IlvD/Edd family. As to quaternary structure, homodimer. [2Fe-2S] cluster is required as a cofactor. The cofactor is Mg(2+).

The enzyme catalyses (2R)-2,3-dihydroxy-3-methylbutanoate = 3-methyl-2-oxobutanoate + H2O. It carries out the reaction (2R,3R)-2,3-dihydroxy-3-methylpentanoate = (S)-3-methyl-2-oxopentanoate + H2O. The protein operates within amino-acid biosynthesis; L-isoleucine biosynthesis; L-isoleucine from 2-oxobutanoate: step 3/4. It participates in amino-acid biosynthesis; L-valine biosynthesis; L-valine from pyruvate: step 3/4. Its function is as follows. Functions in the biosynthesis of branched-chain amino acids. Catalyzes the dehydration of (2R,3R)-2,3-dihydroxy-3-methylpentanoate (2,3-dihydroxy-3-methylvalerate) into 2-oxo-3-methylpentanoate (2-oxo-3-methylvalerate) and of (2R)-2,3-dihydroxy-3-methylbutanoate (2,3-dihydroxyisovalerate) into 2-oxo-3-methylbutanoate (2-oxoisovalerate), the penultimate precursor to L-isoleucine and L-valine, respectively. The protein is Dihydroxy-acid dehydratase of Histophilus somni (strain 129Pt) (Haemophilus somnus).